Here is a 975-residue protein sequence, read N- to C-terminus: Protein HIRA (975 aa).

7 WD repeats span residues 10–50 (RHEG…KDND), 64–103 (DHFG…GTSE), 123–162 (GHTA…CTAV), 165–204 (GHSS…LAHR), 214–256 (GSTF…ATFD), 259–331 (GHNA…PLFV), and 335–374 (FFTQ…LGYR). Over residues 418 to 433 (KKVSSVQQFQSPPKVS) the composition is skewed to low complexity. Disordered stretches follow at residues 418–510 (KKVS…RSQN) and 948–975 (NVEQ…NGAS). The span at 435 to 445 (DAPNPSTSVPN) shows a compositional bias: polar residues. The span at 478–492 (KQREYRRPDGRKRII) shows a compositional bias: basic and acidic residues. Polar residues predominate over residues 499-510 (PSNQDMSNRSQN). Residues 923–954 (ATNRKVQRLLNEFMDLLSEYEAAETNVEQMDV) adopt a coiled-coil conformation.

The protein belongs to the WD repeat HIR1 family.

It localises to the nucleus. Histone chaperone involved in maintining knox genes silencing throughout leaf development. The sequence is that of Protein HIRA from Oryza sativa subsp. japonica (Rice).